Here is a 148-residue protein sequence, read N- to C-terminus: MSEEKEVKPVVAENAEVPAKVEKKKRRRRNYDDYDAEVTESEKKKSKPSEASGKAGAAAAGDSDSESDIDDAKLDRLESNEDEEEDDLAEIDTSNIITTGRRTRGKIIDYKKTAKELDASEQKTDSAATEAAPGAADDEEDDDADFKE.

A disordered region spans residues 1–148; the sequence is MSEEKEVKPV…EEDDDADFKE (148 aa). A compositionally biased stretch (low complexity) spans 49 to 62; it reads SEASGKAGAAAAGD. The segment covering 70–79 has biased composition (basic and acidic residues); it reads DDAKLDRLES. Residues 80–90 are compositionally biased toward acidic residues; that stretch reads NEDEEEDDLAE. Over residues 106-124 the composition is skewed to basic and acidic residues; that stretch reads KIIDYKKTAKELDASEQKT. The segment covering 125-135 has biased composition (low complexity); sequence DSAATEAAPGA. Residues 136–148 are compositionally biased toward acidic residues; that stretch reads ADDEEDDDADFKE.

It belongs to the CHZ1 family. In terms of assembly, forms a heterotrimer with H2A.Z-H2B, stabilizing the association of the histone dimer. Also, with a lower affinity, forms a heterotrimer with H2A-H2B.

Its subcellular location is the nucleus. Functionally, forms a chaperone-bound H2A.Z-H2B complex that acts as a source for SWR1 complex-dependent H2A to H2A.Z histone replacement in chromatin. This chain is Histone H2A.Z-specific chaperone CHZ1 (CHZ1), found in Candida glabrata (strain ATCC 2001 / BCRC 20586 / JCM 3761 / NBRC 0622 / NRRL Y-65 / CBS 138) (Yeast).